The primary structure comprises 353 residues: Stomatin-like protein 2, mitochondrial (353 aa).

A mitochondrion-targeting transit peptide spans 1–28; sequence MLARAARGTGALLLRGSVQASGRIPRRA. S17 bears the Phosphoserine; by PKC/PRKCZ mark. Position 124 is a phosphotyrosine (Y124). An N6-acetyllysine; alternate modification is found at K145. Position 145 is an N6-succinyllysine; alternate (K145). Positions 215–252 form a coiled coil; sequence INVAEGKKQAQILASEAEKAEQINQAAGEASAVLAKAK. K233 is modified (N6-acetyllysine). The interval 324-353 is disordered; it reads VPGAQNSSEARRDVQTTDTSIEELGRVKLS. S330 is modified (phosphoserine).

This sequence belongs to the band 7/mec-2 family. Forms homooligomers. Interacts with MFN2; may form heterooligomers. Interacts with PHB1 and PHB2; recruits them to cardiolipin-enriched mitochondrial membranes and stabilizes them. Interacts with CACNA2D2.

Its subcellular location is the cell membrane. It is found in the mitochondrion. The protein resides in the mitochondrion inner membrane. It localises to the mitochondrion intermembrane space. The protein localises to the membrane raft. Its subcellular location is the cytoplasm. It is found in the cytoskeleton. Its function is as follows. Mitochondrial protein that probably regulates the biogenesis and the activity of mitochondria. Stimulates cardiolipin biosynthesis, binds cardiolipin-enriched membranes where it recruits and stabilizes some proteins including prohibitin and may therefore act in the organization of functional microdomains in mitochondrial membranes. Through regulation of the mitochondrial function may play a role into several biological processes including cell migration, cell proliferation, T-cell activation, calcium homeostasis and cellular response to stress. May play a role in calcium homeostasis through negative regulation of calcium efflux from mitochondria. Required for mitochondrial hyperfusion a pro-survival cellular response to stress which results in increased ATP production by mitochondria. May also regulate the organization of functional domains at the plasma membrane and play a role in T-cell activation through association with the T-cell receptor signaling complex and its regulation. This chain is Stomatin-like protein 2, mitochondrial (Stoml2), found in Rattus norvegicus (Rat).